A 102-amino-acid chain; its full sequence is Large ribosomal subunit protein bL21 (102 aa).

Belongs to the bacterial ribosomal protein bL21 family. In terms of assembly, part of the 50S ribosomal subunit. Contacts protein L20.

In terms of biological role, this protein binds to 23S rRNA in the presence of protein L20. The chain is Large ribosomal subunit protein bL21 from Oceanobacillus iheyensis (strain DSM 14371 / CIP 107618 / JCM 11309 / KCTC 3954 / HTE831).